Here is a 269-residue protein sequence, read N- to C-terminus: MYWIINDNIEFWPEHRKLISVHNADLNVVLTTPASRCLSLLLEAFPDVVAQQDFFTRVWEEEGMRVPTNTLYQNISIIRRGFRAVGDTTHSLIATVPRRGFKIHNDINIQNHVINSSTDAHTHNAPPAIKVNAGYKESIGGAKNFNNKILKHIKSHLIMLSAFVIGAYSAYWLWNNNQPKPFFKDYKTVAEINGCHFNVTEDTIDGLKEFDKYKTRILDSGINCKKHPWLYFPLAKSSPGMIVMACNKNYNQHEVANCLTLSYREVNRD.

Residues 3 to 105 constitute a DNA-binding region (ompR/PhoB-type); that stretch reads WIINDNIEFW…VPRRGFKIHN (103 aa).

The protein to V.cholerae cholera toxin transcriptional activator (ToxR).

This is an uncharacterized protein from Escherichia coli (strain K12).